A 572-amino-acid chain; its full sequence is Proline--tRNA ligase (572 aa).

The protein belongs to the class-II aminoacyl-tRNA synthetase family. ProS type 1 subfamily. In terms of assembly, homodimer.

Its subcellular location is the cytoplasm. The enzyme catalyses tRNA(Pro) + L-proline + ATP = L-prolyl-tRNA(Pro) + AMP + diphosphate. Its function is as follows. Catalyzes the attachment of proline to tRNA(Pro) in a two-step reaction: proline is first activated by ATP to form Pro-AMP and then transferred to the acceptor end of tRNA(Pro). As ProRS can inadvertently accommodate and process non-cognate amino acids such as alanine and cysteine, to avoid such errors it has two additional distinct editing activities against alanine. One activity is designated as 'pretransfer' editing and involves the tRNA(Pro)-independent hydrolysis of activated Ala-AMP. The other activity is designated 'posttransfer' editing and involves deacylation of mischarged Ala-tRNA(Pro). The misacylated Cys-tRNA(Pro) is not edited by ProRS. This Escherichia coli (strain K12 / MC4100 / BW2952) protein is Proline--tRNA ligase.